The primary structure comprises 549 residues: Oxygen-dependent choline dehydrogenase (549 aa).

4 to 33 (DFVIIGSGSAGSAMAYRLSEDGRYSVIVIE) lines the FAD pocket. Histidine 465 functions as the Proton acceptor in the catalytic mechanism.

The protein belongs to the GMC oxidoreductase family. The cofactor is FAD.

The enzyme catalyses choline + A = betaine aldehyde + AH2. The catalysed reaction is betaine aldehyde + NAD(+) + H2O = glycine betaine + NADH + 2 H(+). It functions in the pathway amine and polyamine biosynthesis; betaine biosynthesis via choline pathway; betaine aldehyde from choline (cytochrome c reductase route): step 1/1. In terms of biological role, involved in the biosynthesis of the osmoprotectant glycine betaine. Catalyzes the oxidation of choline to betaine aldehyde and betaine aldehyde to glycine betaine at the same rate. The chain is Oxygen-dependent choline dehydrogenase from Brucella ovis (strain ATCC 25840 / 63/290 / NCTC 10512).